The following is an 89-amino-acid chain: Small ribosomal subunit protein uS15 (89 aa).

This sequence belongs to the universal ribosomal protein uS15 family. In terms of assembly, part of the 30S ribosomal subunit. Forms a bridge to the 50S subunit in the 70S ribosome, contacting the 23S rRNA.

Its function is as follows. One of the primary rRNA binding proteins, it binds directly to 16S rRNA where it helps nucleate assembly of the platform of the 30S subunit by binding and bridging several RNA helices of the 16S rRNA. Functionally, forms an intersubunit bridge (bridge B4) with the 23S rRNA of the 50S subunit in the ribosome. The protein is Small ribosomal subunit protein uS15 of Haemophilus influenzae (strain PittGG).